Here is a 192-residue protein sequence, read N- to C-terminus: Pyridoxal 5'-phosphate synthase subunit PdxT (192 aa).

Residue glycine 47–serine 49 coordinates L-glutamine. Cysteine 78 functions as the Nucleophile in the catalytic mechanism. Residues arginine 105 and isoleucine 139–arginine 140 contribute to the L-glutamine site. Catalysis depends on charge relay system residues histidine 175 and glutamate 177.

This sequence belongs to the glutaminase PdxT/SNO family. In terms of assembly, in the presence of PdxS, forms a dodecamer of heterodimers. Only shows activity in the heterodimer.

The catalysed reaction is aldehydo-D-ribose 5-phosphate + D-glyceraldehyde 3-phosphate + L-glutamine = pyridoxal 5'-phosphate + L-glutamate + phosphate + 3 H2O + H(+). The enzyme catalyses L-glutamine + H2O = L-glutamate + NH4(+). It functions in the pathway cofactor biosynthesis; pyridoxal 5'-phosphate biosynthesis. Catalyzes the hydrolysis of glutamine to glutamate and ammonia as part of the biosynthesis of pyridoxal 5'-phosphate. The resulting ammonia molecule is channeled to the active site of PdxS. This Solibacter usitatus (strain Ellin6076) protein is Pyridoxal 5'-phosphate synthase subunit PdxT.